The sequence spans 260 residues: Centromere protein K (260 aa).

Residues 84–173 are a coiled coil; the sequence is EEELQKVKKE…KKLMNALGEF (90 aa).

Belongs to the CENP-K/MCM22 family. As to quaternary structure, component of the CENPA-HI complex, at least composed of CENPH, CENPI, CENPK, CENPL, CENPM, CENPO and CENPP.

The protein localises to the nucleus. Its subcellular location is the chromosome. It is found in the centromere. It localises to the kinetochore. In terms of biological role, component of the CENPA-HI complex, a centromeric complex involved in assembly of kinetochore proteins, mitotic progression and chromosome segregation. In Gallus gallus (Chicken), this protein is Centromere protein K (CENPK).